Here is a 554-residue protein sequence, read N- to C-terminus: MATATVATTPEGIPVIILKEGSSRTYGKEALRANIAAVKAIEEALKSTYGPRGMDKMLVDSLGDITITNDGATILDKMDLQHPTGKLLVQIAKGQDEETADGTKTAVILAGELAKKAEDLLYKEIHPTIIVSGYKKAEEIALKTIQEIAQPVTINDTDVLRKVALTSLGSKAVAGAREYLADLVVKAVAQVAELRGDKWYVDLDNVQIVKKHGGSVNDTQLVYGIVVDKEVVHPGMPKRIENAKIALLDASLEVEKPELDAEIRINDPTQMHKFLEEEENILKEKVDKIAATGANVVICQKGIDEVAQHYLAKKGILAVRRAKKSDLEKLARATGGRVISNIDELTSQDLGYAALVEERKVGEDKMVFVEGAKNPKSVSILIRGGLERVVDETERALRDALGTVADVIRDGRAVAGGGAVEIEIAKRLRKYAPQVGGKEQLAIEAYANAIEGLIMILAENAGLDPIDKLMQLRSLHENETNKWYGLNLFTGNPEDMWKLGVIEPALVKMNAVKAATEAVTLVLRIDDIVAAGKKSGSEPSGKKEKDKEEKSSED.

The interval 532 to 554 (GKKSGSEPSGKKEKDKEEKSSED) is disordered. Over residues 540-554 (SGKKEKDKEEKSSED) the composition is skewed to basic and acidic residues.

This sequence belongs to the TCP-1 chaperonin family. In terms of assembly, forms a Heterooligomeric complex of two stacked eight-membered rings.

Functionally, molecular chaperone; binds unfolded polypeptides in vitro, and has a weak ATPase activity. The sequence is that of Thermosome subunit beta (thsB) from Saccharolobus solfataricus (strain ATCC 35092 / DSM 1617 / JCM 11322 / P2) (Sulfolobus solfataricus).